Here is a 429-residue protein sequence, read N- to C-terminus: UDP-N-acetylglucosamine 1-carboxyvinyltransferase (429 aa).

A phosphoenolpyruvate-binding site is contributed by 22–23 (KN). Residue arginine 102 coordinates UDP-N-acetyl-alpha-D-glucosamine. Cysteine 126 acts as the Proton donor in catalysis. Residue cysteine 126 is modified to 2-(S-cysteinyl)pyruvic acid O-phosphothioketal. Residues 131–135 (RPVDL), aspartate 316, and isoleucine 338 contribute to the UDP-N-acetyl-alpha-D-glucosamine site.

Belongs to the EPSP synthase family. MurA subfamily.

It localises to the cytoplasm. The enzyme catalyses phosphoenolpyruvate + UDP-N-acetyl-alpha-D-glucosamine = UDP-N-acetyl-3-O-(1-carboxyvinyl)-alpha-D-glucosamine + phosphate. The protein operates within cell wall biogenesis; peptidoglycan biosynthesis. Functionally, cell wall formation. Adds enolpyruvyl to UDP-N-acetylglucosamine. This Rhodopseudomonas palustris (strain BisB5) protein is UDP-N-acetylglucosamine 1-carboxyvinyltransferase.